Consider the following 122-residue polypeptide: UPF0231 protein VSAL_I2591 (122 aa).

This sequence belongs to the UPF0231 family.

The chain is UPF0231 protein VSAL_I2591 from Aliivibrio salmonicida (strain LFI1238) (Vibrio salmonicida (strain LFI1238)).